A 261-amino-acid chain; its full sequence is Phosphoribosylaminoimidazole-succinocarboxamide synthase (261 aa).

Belongs to the SAICAR synthetase family.

It carries out the reaction 5-amino-1-(5-phospho-D-ribosyl)imidazole-4-carboxylate + L-aspartate + ATP = (2S)-2-[5-amino-1-(5-phospho-beta-D-ribosyl)imidazole-4-carboxamido]succinate + ADP + phosphate + 2 H(+). The protein operates within purine metabolism; IMP biosynthesis via de novo pathway; 5-amino-1-(5-phospho-D-ribosyl)imidazole-4-carboxamide from 5-amino-1-(5-phospho-D-ribosyl)imidazole-4-carboxylate: step 1/2. The protein is Phosphoribosylaminoimidazole-succinocarboxamide synthase of Novosphingobium aromaticivorans (strain ATCC 700278 / DSM 12444 / CCUG 56034 / CIP 105152 / NBRC 16084 / F199).